The following is a 376-amino-acid chain: Protein-glutamate methylesterase/protein-glutamine glutaminase 1 (376 aa).

Positions 4–121 constitute a Response regulatory domain; the sequence is KVLVVDDSSF…ARNRDEAVSL (118 aa). Asp-55 bears the 4-aspartylphosphate mark. Residues 138–174 are disordered; that stretch reads RPVASSTPVQERPQSTLNRPTTGLRREAPAQAPVSRA. A compositionally biased stretch (polar residues) spans 141-158; sequence ASSTPVQERPQSTLNRPT. One can recognise a CheB-type methylesterase domain in the interval 183-376; the sequence is SGKKYQLTAI…ERMLVEVGLA (194 aa). Active-site residues include Ser-195, His-222, and Asp-318.

The protein belongs to the CheB family. Post-translationally, phosphorylated by CheA. Phosphorylation of the N-terminal regulatory domain activates the methylesterase activity.

The protein resides in the cytoplasm. It carries out the reaction [protein]-L-glutamate 5-O-methyl ester + H2O = L-glutamyl-[protein] + methanol + H(+). The catalysed reaction is L-glutaminyl-[protein] + H2O = L-glutamyl-[protein] + NH4(+). Functionally, involved in chemotaxis. Part of a chemotaxis signal transduction system that modulates chemotaxis in response to various stimuli. Catalyzes the demethylation of specific methylglutamate residues introduced into the chemoreceptors (methyl-accepting chemotaxis proteins or MCP) by CheR. Also mediates the irreversible deamidation of specific glutamine residues to glutamic acid. The sequence is that of Protein-glutamate methylesterase/protein-glutamine glutaminase 1 from Vibrio vulnificus (strain CMCP6).